We begin with the raw amino-acid sequence, 154 residues long: NADPH-dependent 7-cyano-7-deazaguanine reductase (154 aa).

Cysteine 52 (thioimide intermediate) is an active-site residue. The active-site Proton donor is the aspartate 59. Substrate is bound by residues 74-76 and 93-94; these read VES and HE.

This sequence belongs to the GTP cyclohydrolase I family. QueF type 1 subfamily.

The protein localises to the cytoplasm. It catalyses the reaction 7-aminomethyl-7-carbaguanine + 2 NADP(+) = 7-cyano-7-deazaguanine + 2 NADPH + 3 H(+). Its pathway is tRNA modification; tRNA-queuosine biosynthesis. Catalyzes the NADPH-dependent reduction of 7-cyano-7-deazaguanine (preQ0) to 7-aminomethyl-7-deazaguanine (preQ1). The polypeptide is NADPH-dependent 7-cyano-7-deazaguanine reductase (Ruegeria sp. (strain TM1040) (Silicibacter sp.)).